We begin with the raw amino-acid sequence, 1287 residues long: Pullulanase A (1287 aa).

The signal sequence occupies residues 1 to 44 (MRKTPSHTEKKMVYSIRSLKNGTGSVLIGASLVLLAMATPTISS). The segment at 42-139 (ISSDESTPTT…VTTETKAEEP (98 aa)) is disordered. A compositionally biased stretch (low complexity) spans 48-61 (TPTTNEPNNRNTTT). The segment covering 79–90 (DISSPGNANASL) has biased composition (polar residues). Low complexity-rich tracts occupy residues 99–113 (TEPTTPAASPADPAP) and 122–133 (EPTTSTSPVTTE). Residues 163 to 165 (WTW), Trp-175, Asp-221, 270 to 272 (WYW), Trp-283, Lys-325, and Asn-330 contribute to the substrate site. Ca(2+)-binding residues include Ser-668 and Tyr-670. Substrate-binding positions include 674-675 (YD) and Phe-750. Asp-785 functions as the Nucleophile in the catalytic mechanism. Glu-814 (proton donor) is an active-site residue. Trp-816 contributes to the substrate binding site. 3 residues coordinate Ca(2+): Met-835, Thr-838, and Asp-839. Asp-846, Arg-849, and Tyr-856 together coordinate substrate. Ca(2+)-binding residues include Asp-889 and Asp-893. Residues Asn-903, Lys-976, and 996 to 998 (DSY) each bind substrate. Ca(2+) is bound at residue Asp-999. Positions 1147–1255 (VSQNGTSHES…TPDRQAELPN (109 aa)) are disordered. Basic and acidic residues predominate over residues 1156–1203 (STAEEKPDSTPSKPEHQNEASHPAHQDPAPEARPDSTKPDAKVADAEN). Low complexity predominate over residues 1212–1225 (SQAEQPAQEAQASS). Residues 1228 to 1239 (EAVRKESVENSS) show a composition bias toward basic and acidic residues. The LPXTG sorting signal motif lies at 1253 to 1257 (LPNTG). Residue Thr-1256 is modified to Pentaglycyl murein peptidoglycan amidated threonine. Positions 1257–1287 (GIKNENKLLFAGISLLALLGLGFLLKNKKEN) are cleaved as a propeptide — removed by sortase.

The protein belongs to the glycosyl hydrolase 13 family.

The protein localises to the secreted. The protein resides in the cell wall. It is found in the cell surface. It catalyses the reaction Hydrolysis of (1-&gt;6)-alpha-D-glucosidic linkages in pullulan, amylopectin and glycogen, and in the alpha- and beta-limit dextrins of amylopectin and glycogen.. Its activity is regulated as follows. Inhibited by 4-O-alpha-D-glucopyranosylmoranoline (G1M). Functionally, virulence factor. Involved in the degradation of glycogen of the mammalian host cells. Hydrolyzes the alpha-1,6-branchpoints of glycogen. Hydrolyzes pullulan. Does not hydrolyze dextran. Binds to mouse lung alveolar type II cells that are rich in glycogen stores. Is an alpha-glucan-specific carbohydrate-binding protein, which binds to amylose (pure alpha-(1,4)-linked glucose), amylopectin (alpha-(1,4)-linked glucose with alpha-(1,6) branch points), pullulan (linear polymer of mixed alpha-(1,4)- and alpha-(1,6)-linked glucose) and glycogen (similar to amylopectin with more frequent alpha-(1,6) branch points) in vitro. Does not bind to dextran (a linear polymer of alpha-(1,6)-linked glucose). In Streptococcus pneumoniae, this protein is Pullulanase A.